The primary structure comprises 29 residues: Cyclotide psyleio D (29 aa).

A cross-link (cyclopeptide (Gly-Asp)) is located at residues 1–29 (GLPVCGESCFGGTCNTPGCSCTWPVCTRD). Cystine bridges form between C5–C19, C9–C21, and C14–C26.

Post-translationally, this is a cyclic peptide.

In terms of biological role, probably participates in a plant defense mechanism. The protein is Cyclotide psyleio D of Psychotria brachyceras.